Reading from the N-terminus, the 135-residue chain is D-ribose pyranase (135 aa).

The active-site Proton donor is the H20. Substrate contacts are provided by residues D28, H102, and 124–126 (YSN).

The protein belongs to the RbsD / FucU family. RbsD subfamily. As to quaternary structure, homodecamer.

The protein localises to the cytoplasm. The catalysed reaction is beta-D-ribopyranose = beta-D-ribofuranose. The protein operates within carbohydrate metabolism; D-ribose degradation; D-ribose 5-phosphate from beta-D-ribopyranose: step 1/2. Catalyzes the interconversion of beta-pyran and beta-furan forms of D-ribose. The chain is D-ribose pyranase from Thermotoga maritima (strain ATCC 43589 / DSM 3109 / JCM 10099 / NBRC 100826 / MSB8).